A 1522-amino-acid chain; its full sequence is ATP-binding cassette sub-family C member 3 (1522 aa).

Topologically, residues 1 to 32 are extracellular; the sequence is MDRLCGSGELGSKFWDSNLTVYTNTPDLTPCF. Asparagine 18 carries an N-linked (GlcNAc...) asparagine glycan. Residues 33 to 53 traverse the membrane as a helical segment; that stretch reads QNSLLAWVPCIYLWAALPCYL. Topologically, residues 54–73 are cytoplasmic; that stretch reads FYLRHHRLGYIVLSCLSRLK. A helical membrane pass occupies residues 74–94; sequence TALGVLLWCISWVDLFYSFHG. The Extracellular segment spans residues 95–99; it reads LVHGS. A helical transmembrane segment spans residues 100 to 120; that stretch reads SPAPVFFITPLLVGITMLLAT. At 121–132 the chain is on the cytoplasmic side; that stretch reads LLIQYERLRGVR. A helical membrane pass occupies residues 133–153; the sequence is SSGVLIIFWLLCVICAIIPFR. The Extracellular portion of the chain corresponds to 154-171; sequence SKILLALAEGKILDPFRF. The chain crosses the membrane as a helical span at residues 172–192; that stretch reads TTFYIYFALVLCAFILSCFQE. Over 193–301 the chain is Cytoplasmic; sequence KPPLFSPENL…KTKKPSFLRA (109 aa). Residues 302-322 traverse the membrane as a helical segment; that stretch reads LVRTFTSSLLMGACFKLIQDL. Positions 310-592 constitute an ABC transmembrane type-1 1 domain; that stretch reads LLMGACFKLI…LPQLISGMTQ (283 aa). At 323-347 the chain is on the extracellular side; that stretch reads SPSSTHSCSASSSGLFRPHGPYWWG. A helical membrane pass occupies residues 348–368; sequence FLLAGLMFVSSTMQTLILHQH. At 369–424 the chain is on the cytoplasmic side; it reads YHCIFVMALRIRTAIIGVIYRKALTITNSVKREYTVGEMVNLMSVDAQRFMDVSPF. Residues 425–445 traverse the membrane as a helical segment; that stretch reads INLLWSAPLQVILAIYFLWQI. Over 446–448 the chain is Extracellular; that stretch reads LGP. Residues 449–469 traverse the membrane as a helical segment; sequence SALAGVAVIVLLIPLNGAVSM. The Cytoplasmic segment spans residues 470–531; the sequence is KMKTYQVQQM…LLRKGAYLQA (62 aa). The helical transmembrane segment at 532 to 552 threads the bilayer; the sequence is ISTFIWVCTPFMVTLITLGVY. Over 553–574 the chain is Extracellular; that stretch reads VCVDKNNVLDAEKAFVSLSLFN. Residues 575–595 form a helical membrane-spanning segment; it reads ILKIPLNLLPQLISGMTQTSV. The Cytoplasmic segment spans residues 596 to 958; that stretch reads SLKRIQDFLN…VKLSVYWDYA (363 aa). Residues 625 to 849 form the ABC transporter 1 domain; the sequence is ITIHNGTFSW…DGSFANFLRN (225 aa). 659-666 contacts ATP; the sequence is GPVGCGKS. Phosphoserine occurs at positions 902 and 905. Residues 959–979 traverse the membrane as a helical segment; sequence KSVGLCTTLFICLLYAGQNAV. The ABC transmembrane type-1 2 domain maps to 966–1247; sequence TLFICLLYAG…MIRTLSDLES (282 aa). At 980 to 1016 the chain is on the extracellular side; that stretch reads AIGANVWLSAWTNDVEEHGQQNNTSVRLGVYATLGIL. N-linked (GlcNAc...) asparagine glycosylation is found at asparagine 1001 and asparagine 1002. A helical membrane pass occupies residues 1017–1037; sequence QGLLVMLSAFTMVVGAIQAAR. The Cytoplasmic segment spans residues 1038-1080; it reads LLHTALLHNQIRAPQSFFDTTPSGRILNRFSKDIYVIHEVLAP. Residues 1081–1101 traverse the membrane as a helical segment; sequence TILMLFNSFYTSISTIVVIVA. A topological domain (extracellular) is located at residue serine 1102. Residues 1103–1123 form a helical membrane-spanning segment; sequence TPLFCVVVLPLAVFYGFVQRF. Residues 1124 to 1194 are Cytoplasmic-facing; that stretch reads YVATSRQLKR…ASNRWLGVHV (71 aa). Residues 1195–1215 traverse the membrane as a helical segment; it reads EFVGNCVVLFSALFAVIGRNS. At 1216 to 1217 the chain is on the extracellular side; sequence LN. A helical membrane pass occupies residues 1218–1238; that stretch reads PGLVGLSVSYALQVTLSLNWM. Topologically, residues 1239–1522 are cytoplasmic; it reads IRTLSDLESN…YGMAKDAGLA (284 aa). In terms of domain architecture, ABC transporter 2 spans 1286 to 1518; it reads FRNYSVRYRP…GGIFYGMAKD (233 aa). 1318 to 1325 is an ATP binding site; that stretch reads GRTGAGKS.

Belongs to the ABC transporter superfamily. ABCC family. Conjugate transporter (TC 3.A.1.208) subfamily. As to expression, expressed in lung, ileum, colon and liver. Higher in liver of Eisai hyperbilirubinemic rats.

It is found in the basolateral cell membrane. Its subcellular location is the basal cell membrane. It catalyses the reaction an S-substituted glutathione(in) + ATP + H2O = an S-substituted glutathione(out) + ADP + phosphate + H(+). The catalysed reaction is ATP + H2O + xenobioticSide 1 = ADP + phosphate + xenobioticSide 2.. It carries out the reaction taurocholate(in) + ATP + H2O = taurocholate(out) + ADP + phosphate + H(+). The enzyme catalyses glycocholate(in) + ATP + H2O = glycocholate(out) + ADP + phosphate + H(+). It catalyses the reaction taurolithocholate 3-sulfate(in) + ATP + H2O = taurolithocholate 3-sulfate(out) + ADP + phosphate + H(+). The catalysed reaction is 17beta-estradiol 17-O-(beta-D-glucuronate)(in) + ATP + H2O = 17beta-estradiol 17-O-(beta-D-glucuronate)(out) + ADP + phosphate + H(+). It carries out the reaction dehydroepiandrosterone 3-sulfate(in) + ATP + H2O = dehydroepiandrosterone 3-sulfate(out) + ADP + phosphate + H(+). The enzyme catalyses leukotriene C4(in) + ATP + H2O = leukotriene C4(out) + ADP + phosphate + H(+). It catalyses the reaction (4Z,15Z)-bilirubin IXalpha C8-beta-D-glucuronoside(in) + ATP + H2O = (4Z,15Z)-bilirubin IXalpha C8-beta-D-glucuronoside(out) + ADP + phosphate + H(+). The catalysed reaction is (4Z,15Z)-bilirubin IXalpha C8,C12-beta-D-bisglucuronoside(in) + ATP + H2O = (4Z,15Z)-bilirubin IXalpha C8,C12-beta-D-bisglucuronoside(out) + ADP + phosphate + H(+). It carries out the reaction taurochenodeoxycholate 3-sulfate(in) + ATP + H2O = taurochenodeoxycholate 3-sulfate(out) + ADP + phosphate + H(+). Its function is as follows. ATP-dependent transporter of the ATP-binding cassette (ABC) family that binds and hydrolyzes ATP to enable active transport of various substrates including many drugs, toxicants and endogenous compound across cell membranes. Transports glucuronide conjugates such as bilirubin diglucuronide, estradiol-17-beta-o-glucuronide and GSH conjugates such as leukotriene C4 (LTC4). Transports also various bile salts (taurocholate, glycocholate, taurochenodeoxycholate-3-sulfate, taurolithocholate- 3-sulfate). Does not contribute substantially to bile salt physiology but provides an alternative route for the export of bile acids and glucuronides from cholestatic hepatocytes. May contribute to regulate the transport of organic compounds in testes across the blood-testis-barrier. The protein is ATP-binding cassette sub-family C member 3 (Abcc3) of Rattus norvegicus (Rat).